The chain runs to 274 residues: Rhamnulose-1-phosphate aldolase (274 aa).

The active site involves glutamate 117. Zn(2+) is bound by residues histidine 141, histidine 143, and histidine 212.

This sequence belongs to the aldolase class II family. RhaD subfamily. Homotetramer. It depends on Zn(2+) as a cofactor.

Its subcellular location is the cytoplasm. It carries out the reaction L-rhamnulose 1-phosphate = (S)-lactaldehyde + dihydroxyacetone phosphate. It functions in the pathway carbohydrate degradation; L-rhamnose degradation; glycerone phosphate from L-rhamnose: step 3/3. In terms of biological role, catalyzes the reversible cleavage of L-rhamnulose-1-phosphate to dihydroxyacetone phosphate (DHAP) and L-lactaldehyde. This is Rhamnulose-1-phosphate aldolase from Escherichia coli O157:H7.